Consider the following 1247-residue polypeptide: F-box/WD repeat-containing protein A (1247 aa).

The 214-residue stretch at 1–214 (MQYVNGNDIS…PATVSGRLAK (214 aa)) folds into the START domain. Disordered stretches follow at residues 484-514 (GNKDGNVVSSKNKRKRNKNNENKNNNNDNII) and 552-576 (QQPQQQQQQPQEQQQNHSQLKKEIK). The span at 552-566 (QQPQQQQQQPQEQQQ) shows a compositional bias: low complexity. The region spanning 631-677 (NSGFDNLPEEVVQIIFSNLSAINIVNLSLVCKRFKMATDSPILWKNL) is the F-box domain. Disordered stretches follow at residues 697–744 (SNLS…QQQQ) and 833–856 (GQESPINKNSSDNPKPNAYNKRDN). 2 stretches are compositionally biased toward low complexity: residues 707–719 (NSNSGDSADGSSS) and 726–744 (QQQNQQQNQQQNQQQQQQQ). Residues 833 to 846 (GQESPINKNSSDNP) show a composition bias toward polar residues. WD repeat units follow at residues 895–934 (GHNRAIKAVKSEGNSAITVSTEKKIKFWNLNTGQCIGDYE), 945–984 (DHTQKSSCIWPLSDYTKVHIGHKNGTVTMVDFIEQPIEVI), 988–1025 (RPTNLADGFDFTFPGKYLIWEHTIIHYWDVETSTLLWN), 1029–1073 (AHTK…CINT), 1076–1114 (GHSYAVNCIEPIGDYMALTGSTDKTLKLWDLRQASTFIS), 1119–1158 (KHTGPIRCISYQEKNGIVLSGSDDGSIIAFNLDNWNLSNI), and 1218–1247 (NHESAVTCIESDEAGFISGSQNGLVLRWDF).

As to quaternary structure, component of an SCF complex including at least culA. Formation of this complex appears to require activity of the MAP kinase erk2. Interacts with regA.

Substrate recognition component of a SCF (SKP1-CUL1-F-box protein) E3 ubiquitin-protein ligase complex which mediates the ubiquitination and subsequent proteasomal degradation of target proteins. May target the cAMP phosphodiesterase regA for degradation leading to an increase in cAMP and PKA activity. Promotes development of prestalk cells as opposed to prespores within the developing fruiting body. Required for culmination and fruiting body development. The chain is F-box/WD repeat-containing protein A (fbxA) from Dictyostelium discoideum (Social amoeba).